A 233-amino-acid polypeptide reads, in one-letter code: Transcriptional regulatory protein WalR (233 aa).

A Response regulatory domain is found at 4-117 (KVVVVDDEKP…ELIARVKANL (114 aa)). 4-aspartylphosphate is present on D53. The ompR/PhoB-type DNA-binding region spans 132–231 (TNEITIKDIV…RRGVGYFLQQ (100 aa)).

Post-translationally, phosphorylated by WalK.

It is found in the cytoplasm. Member of the two-component regulatory system WalK/WalR. The protein is Transcriptional regulatory protein WalR (walR) of Staphylococcus haemolyticus (strain JCSC1435).